A 386-amino-acid polypeptide reads, in one-letter code: Putative gustatory receptor 92a (386 aa).

The Cytoplasmic portion of the chain corresponds to 1-14 (MFEFLHQMSAPKLS). Residues 15–35 (TSILRYIFRYAQFIGVIFFCL) traverse the membrane as a helical segment. Residues 36 to 79 (HTRKDDKTVFIRNWLKWLNVTHRIITFTRFFWVYIASISIKTNR) are Extracellular-facing. Asparagine 54 carries an N-linked (GlcNAc...) asparagine glycan. Residues 80-100 (VLQVLHGMRLVLSIPNVAVIL) form a helical membrane-spanning segment. Topologically, residues 101 to 141 (CYHIFRGPEIIDLINQFLRLFRQVSDLFKTKTPGFGGRREL) are cytoplasmic. Residues 142–162 (ILILLNLISFAHEQTYLWFTI) form a helical membrane-spanning segment. Residues 163–169 (RKGFSWR) are Extracellular-facing. The chain crosses the membrane as a helical span at residues 170-190 (FLIDWWCDFYLVSATNIFIHI). At 191–256 (NSIGYLSLGV…YHTSIMFHKL (66 aa)) the chain is on the cytoplasmic side. A helical membrane pass occupies residues 257–277 (FVPLLFLALIYKVLLIALIGF). Residues 278–287 (NVAVEFYLNS) lie on the Extracellular side of the membrane. Residues 288-308 (FIFWILLGKHVLDLFLVTVSV) form a helical membrane-spanning segment. Over 309–356 (EGAVNQFLNIGMQFGNVGDLSKFQTTLDTLFLHLRLGHFRVSILGLFD) the chain is Cytoplasmic. The helical transmembrane segment at 357–377 (VTQMQYLQFLSALLSGLAFIA) threads the bilayer. Residues 378–386 (QYRMQVGNG) lie on the Extracellular side of the membrane.

This sequence belongs to the insect chemoreceptor superfamily. Gustatory receptor (GR) family. Gr93a subfamily.

The protein resides in the cell membrane. Functionally, probable gustatory receptor which mediates acceptance or avoidance behavior, depending on its substrates. This is Putative gustatory receptor 92a (Gr92a) from Drosophila melanogaster (Fruit fly).